The following is a 68-amino-acid chain: MVLRQLSRQASVKVGKTWTGTKRRAQRIFIFILELLLDFCRGEDSVDGKKKKDSLTDKTETVTEKKES.

The Cytoplasmic segment spans residues 1–24 (MVLRQLSRQASVKVGKTWTGTKRR). Ser-7 and Ser-11 each carry phosphoserine; by host. At Thr-21 the chain carries Phosphothreonine; by host. The helical; Signal-anchor for type II membrane protein transmembrane segment at 25–41 (AQRIFIFILELLLDFCR) threads the bilayer. Residues 42–68 (GEDSVDGKKKKDSLTDKTETVTEKKES) lie on the Extracellular side of the membrane. Positions 44-68 (DSVDGKKKKDSLTDKTETVTEKKES) are disordered.

Belongs to the polyomavirus agnoprotein family. Homooligomer. Interacts with VP1. Interacts with large T antigen; this interaction may impact upon the activity of T-antigen on the control of viral gene transcription and replication. Interacts with small t antigen. Interacts with host CBX5; this interaction induces the dissociation of CBX5 from LBR, resulting in destabilization of the nuclear envelope. Post-translationally, phosphorylated by host PKC. Phosphorylation alters the stability and may also have an impact on the subcellular location.

It localises to the host cytoplasm. Its subcellular location is the host nucleus membrane. The protein localises to the host rough endoplasmic reticulum membrane. It is found in the host cell membrane. Its function is as follows. Alters the structure of the nuclear envelope by interacting with host CBX5 and disrupting CBX5 association with LBR. Involved in the perinuclear-nuclear localization of the capsid protein VP1 during virion assembly and maturation. Plays an important role in the release of progeny virions from infected cells and in viral propagation, probably by acting as a viral ionic channel in the host plasma membrane. Allows influx of extracellular calcium ions in the host cell. May contribute to viral genome transcription and translation of viral late proteins. The sequence is that of Agnoprotein from Simian virus 12 (strain wt100) (SV-12).